Here is a 669-residue protein sequence, read N- to C-terminus: Zinc finger MYM-type protein 5 (669 aa).

Residues Lys-88, Lys-91, Lys-134, Lys-149, Lys-166, and Lys-225 each participate in a glycyl lysine isopeptide (Lys-Gly) (interchain with G-Cter in SUMO2) cross-link. 4 consecutive MYM-type zinc fingers follow at residues 265-299, 311-351, 358-393, and 404-431; these read HLFC…KKAN, QEFY…RHEV, HKLC…KSTG, and KRFC…ASEN. Glycyl lysine isopeptide (Lys-Gly) (interchain with G-Cter in SUMO2) cross-links involve residues Lys-443, Lys-455, Lys-462, and Lys-552.

Interacts (via N-terminal 120 amino acid region) with ETV5 (via C-terminal).

The protein localises to the nucleus. Functions as a transcriptional regulator. This Homo sapiens (Human) protein is Zinc finger MYM-type protein 5 (ZMYM5).